A 760-amino-acid polypeptide reads, in one-letter code: NAD(P)H-quinone oxidoreductase subunit 5, chloroplastic (760 aa).

Transmembrane regions (helical) follow at residues 9-29 (WIIS…LLLF), 39-59 (IWAF…IDLF), 89-109 (IDPL…LVLV), 125-145 (FVYM…SNLI), 147-167 (IYIF…FWFT), 185-205 (GDFG…SFEF), 221-241 (NEVH…GAIA), 260-280 (TPIS…FLVA), 282-302 (LLPL…IGII), 329-349 (LGYT…FHLI), 356-376 (ALLF…VGYS), 398-418 (IAFL…CFWS), 429-449 (YSPI…FYMF), 556-576 (ILFP…IGIP), 620-640 (FSVS…KPIY), and 734-754 (FYLL…SSIF).

It belongs to the complex I subunit 5 family. In terms of assembly, NDH is composed of at least 16 different subunits, 5 of which are encoded in the nucleus.

It is found in the plastid. The protein resides in the chloroplast thylakoid membrane. The enzyme catalyses a plastoquinone + NADH + (n+1) H(+)(in) = a plastoquinol + NAD(+) + n H(+)(out). It catalyses the reaction a plastoquinone + NADPH + (n+1) H(+)(in) = a plastoquinol + NADP(+) + n H(+)(out). NDH shuttles electrons from NAD(P)H:plastoquinone, via FMN and iron-sulfur (Fe-S) centers, to quinones in the photosynthetic chain and possibly in a chloroplast respiratory chain. The immediate electron acceptor for the enzyme in this species is believed to be plastoquinone. Couples the redox reaction to proton translocation, and thus conserves the redox energy in a proton gradient. The chain is NAD(P)H-quinone oxidoreductase subunit 5, chloroplastic (ndhF) from Populus trichocarpa (Western balsam poplar).